The primary structure comprises 599 residues: NADH-ubiquinone oxidoreductase chain 5 (599 aa).

The next 16 membrane-spanning stretches (helical) occupy residues 1–21 (MLEL…IFLF), 28–48 (FAES…ILLM), 81–101 (CFFV…FYYM), 115–135 (GLFL…QLLI), 171–191 (GDIG…DWSF), 193–213 (GLYA…LAAA), 233–253 (TPVS…FLLI), 265–285 (IQLM…ICAL), 302–322 (LGLM…FLHI), 323–343 (CMHA…IHGL), 363–383 (SVCF…AGFF), 398–420 (NSWA…VRLL), 455–475 (VIAG…CLSL), 481–501 (LAAV…VNLL), 510–530 (IPEL…HKLI), and 577–597 (LIKM…GIMI).

It belongs to the complex I subunit 5 family.

Its subcellular location is the mitochondrion inner membrane. The enzyme catalyses a ubiquinone + NADH + 5 H(+)(in) = a ubiquinol + NAD(+) + 4 H(+)(out). Its function is as follows. Core subunit of the mitochondrial membrane respiratory chain NADH dehydrogenase (Complex I) that is believed to belong to the minimal assembly required for catalysis. Complex I functions in the transfer of electrons from NADH to the respiratory chain. The immediate electron acceptor for the enzyme is believed to be ubiquinone. The protein is NADH-ubiquinone oxidoreductase chain 5 (ND5) of Branchiostoma floridae (Florida lancelet).